We begin with the raw amino-acid sequence, 510 residues long: Glycerol kinase (510 aa).

Thr-13 provides a ligand contact to ADP. The ATP site is built by Thr-13 and Thr-14. Sn-glycerol 3-phosphate is bound at residue Thr-13. Arg-17 is a binding site for ADP. The sn-glycerol 3-phosphate site is built by Arg-83, Glu-84, Tyr-135, and Asp-255. Glycerol-binding residues include Arg-83, Glu-84, Tyr-135, Asp-255, and Gln-256. ADP is bound by residues Thr-277, Gly-321, Gly-421, and Asn-425. Thr-277, Gly-321, and Gly-421 together coordinate ATP.

The protein belongs to the FGGY kinase family.

It catalyses the reaction glycerol + ATP = sn-glycerol 3-phosphate + ADP + H(+). The protein operates within polyol metabolism; glycerol degradation via glycerol kinase pathway; sn-glycerol 3-phosphate from glycerol: step 1/1. In terms of biological role, key enzyme in the regulation of glycerol uptake and metabolism. Catalyzes the phosphorylation of glycerol to yield sn-glycerol 3-phosphate. The polypeptide is Glycerol kinase (Halobacterium salinarum (strain ATCC 29341 / DSM 671 / R1)).